Consider the following 105-residue polypeptide: MKFLALFFLALAGVAFAHDGGMGGMDMIKSYSILGAMIGLGIAAFGGAIGMGNAAAATITGTARNPGVGGKLLTTMFVAMAMIEAQVIYTLVFAIIAIYSNPFLS.

3 consecutive transmembrane segments (helical) span residues 3–23 (FLAL…GGMG), 32–52 (SILG…IGMG), and 78–98 (VAMA…IIAI).

This sequence belongs to the ATPase C chain family. F-type ATPases have 2 components, F(1) - the catalytic core - and F(0) - the membrane proton channel. F(1) has five subunits: alpha(3), beta(3), gamma(1), delta(1), epsilon(1). F(0) has three main subunits: a(1), b(2) and c(10-14). The alpha and beta chains form an alternating ring which encloses part of the gamma chain. F(1) is attached to F(0) by a central stalk formed by the gamma and epsilon chains, while a peripheral stalk is formed by the delta and b chains.

It is found in the cell inner membrane. F(1)F(0) ATP synthase produces ATP from ADP in the presence of a proton or sodium gradient. F-type ATPases consist of two structural domains, F(1) containing the extramembraneous catalytic core and F(0) containing the membrane proton channel, linked together by a central stalk and a peripheral stalk. During catalysis, ATP synthesis in the catalytic domain of F(1) is coupled via a rotary mechanism of the central stalk subunits to proton translocation. Its function is as follows. Key component of the F(0) channel; it plays a direct role in translocation across the membrane. A homomeric c-ring of between 10-14 subunits forms the central stalk rotor element with the F(1) delta and epsilon subunits. The protein is ATP synthase subunit c of Helicobacter pylori (strain P12).